We begin with the raw amino-acid sequence, 235 residues long: Leucyl/phenylalanyl-tRNA--protein transferase (235 aa).

Belongs to the L/F-transferase family.

The protein resides in the cytoplasm. It carries out the reaction N-terminal L-lysyl-[protein] + L-leucyl-tRNA(Leu) = N-terminal L-leucyl-L-lysyl-[protein] + tRNA(Leu) + H(+). The catalysed reaction is N-terminal L-arginyl-[protein] + L-leucyl-tRNA(Leu) = N-terminal L-leucyl-L-arginyl-[protein] + tRNA(Leu) + H(+). It catalyses the reaction L-phenylalanyl-tRNA(Phe) + an N-terminal L-alpha-aminoacyl-[protein] = an N-terminal L-phenylalanyl-L-alpha-aminoacyl-[protein] + tRNA(Phe). Functionally, functions in the N-end rule pathway of protein degradation where it conjugates Leu, Phe and, less efficiently, Met from aminoacyl-tRNAs to the N-termini of proteins containing an N-terminal arginine or lysine. In Cellvibrio japonicus (strain Ueda107) (Pseudomonas fluorescens subsp. cellulosa), this protein is Leucyl/phenylalanyl-tRNA--protein transferase.